The chain runs to 251 residues: PF03932 family protein CutC (251 aa).

It belongs to the CutC family.

It localises to the cytoplasm. The polypeptide is PF03932 family protein CutC (Edwardsiella ictaluri (strain 93-146)).